The sequence spans 607 residues: Terpenoid synthase 29 (607 aa).

Mg(2+) contacts are provided by aspartate 358, aspartate 362, asparagine 502, threonine 506, and glutamate 510. The DDXXD motif signature appears at 358–362 (DDTYD).

It belongs to the terpene synthase family. Tpsa subfamily. Requires Mg(2+) as cofactor. Mn(2+) is required as a cofactor. As to expression, predominantly expressed in flowers but also in siliques, roots, leaves and stems.

Its subcellular location is the cytoplasm. It functions in the pathway secondary metabolite biosynthesis; terpenoid biosynthesis. In Arabidopsis thaliana (Mouse-ear cress), this protein is Terpenoid synthase 29 (TPS29).